The sequence spans 525 residues: Beta-galactoside alpha-2,6-sialyltransferase 2 (525 aa).

Over 1–11 (MKPHLKQWRQR) the chain is Cytoplasmic. Residues 12–32 (MLFAIFVWGLLFLAIFIYFTN) form a helical; Signal-anchor for type II membrane protein membrane-spanning segment. Residues 33-525 (SNPAAPMPSS…PVTRPNNTNT (493 aa)) are Lumenal-facing. 2 disordered regions span residues 85–107 (SASPFNSWPGDPQKGDQAQDGFD) and 145–183 (RQGALGLPSPGESSWQSGPGQPKQEKLRHPRRGSLPEEA). 3 disulfides stabilise this stretch: Cys249-Cys515, Cys292-Cys444, and Cys462-Cys473. N-linked (GlcNAc...) asparagine glycosylation is found at Asn303 and Asn333. An N-linked (GlcNAc...) asparagine glycan is attached at Asn521.

The protein belongs to the glycosyltransferase 29 family.

It localises to the golgi apparatus. The protein resides in the golgi stack membrane. The enzyme catalyses a beta-D-galactoside + CMP-N-acetyl-beta-neuraminate = an N-acetyl-alpha-neuraminyl-(2-&gt;6)-beta-D-galactosyl derivative + CMP + H(+). Functionally, transfers sialic acid from the donor of substrate CMP-sialic acid to galactose containing acceptor substrates. Has alpha-2,6-sialyltransferase activity toward oligosaccharides that have the Gal-beta-1,4-GlcNAc sequence at the non-reducing end of their carbohydrate groups, but it has weak or no activities toward glycoproteins and glycolipids. This chain is Beta-galactoside alpha-2,6-sialyltransferase 2 (St6gal2), found in Rattus norvegicus (Rat).